Here is a 1615-residue protein sequence, read N- to C-terminus: Low-density lipoprotein receptor-related protein 5 (1615 aa).

An N-terminal signal peptide occupies residues 1–31; it reads MEAAPPGPPWPLLLLLLLLLALCGCPAPAAA. The tract at residues 32-288 is beta-propeller 1; the sequence is SPLLLFANRR…YSPMDIQVLS (257 aa). The Extracellular segment spans residues 32 to 1384; the sequence is SPLLLFANRR…PPSDDSPAHS (1353 aa). 5 LDL-receptor class B repeats span residues 75 to 119, 120 to 162, 163 to 206, 207 to 247, and 248 to 290; these read GAVY…DWVG, KKLY…DPAH, GYMY…DLEE, QKLY…TLSG, and DTLY…LSQE. One copy of the YWTD 1 repeat lies at 78-81; sequence YWTD. Asn93 carries N-linked (GlcNAc...) asparagine glycosylation. One copy of the YWTD 2 repeat lies at 123–126; it reads YWTD. The N-linked (GlcNAc...) asparagine glycan is linked to Asn138. One copy of the YWTD 3 repeat lies at 166-169; the sequence is YWTD. The stretch at 251–254 is one YWTD 4 repeat; it reads YWTD. The EGF-like 1 domain maps to 295–337; it reads FHTRCEEDNGGCSHLCLLSPSEPFYTCACPTGVQLQDNGRTCK. 3 disulfides stabilise this stretch: Cys299–Cys310, Cys306–Cys321, and Cys323–Cys336. The segment at 341–602 is beta-propeller 2; it reads EEVLLLARRT…AVNVAKVVGT (262 aa). LDL-receptor class B repeat units lie at residues 385 to 427, 428 to 470, 471 to 514, 515 to 557, and 558 to 600; these read GYVY…DWVA, RNLY…HPVM, GLMY…DLQE, GKLY…LGDF, and IYWT…AKVV. 2 YWTD repeats span residues 388–391 and 431–434; these read YWTD. An N-linked (GlcNAc...) asparagine glycan is attached at Asn446. One copy of the YWTD 7 repeat lies at 474-477; sequence YWTD. A glycan (N-linked (GlcNAc...) asparagine) is linked at Asn499. One copy of the YWTD 8 repeat lies at 559–562; sequence YWTD. The EGF-like 2 domain maps to 601–641; it reads GTNPCADRNGGCSHLCFFTPHATRCGCPIGLELLSDMKTCI. Intrachain disulfides connect Cys605-Cys616, Cys612-Cys625, and Cys627-Cys640. The interval 644 to 903 is beta-propeller 3; it reads EAFLVFTSRA…VFHSSRQDGL (260 aa). LDL-receptor class B repeat units lie at residues 687–729, 730–772, 773–815, 816–855, and 856–898; these read NHIY…DWMG, KNLY…DPTK, GYIY…DYAD, QRLY…TQYS, and DYIY…FHSS. A YWTD 9 repeat occupies 690–693; sequence YWTD. Asn705 is a glycosylation site (N-linked (GlcNAc...) asparagine). 2 YWTD repeats span residues 819–822 and 859–862; these read YWTD. Asn878 carries an N-linked (GlcNAc...) asparagine glycan. The EGF-like 3 domain maps to 902-942; that stretch reads GLNDCMHNNGQCGQLCLAIPGGHRCGCASHYTLDPSSRNCS. Intrachain disulfides connect Cys906-Cys917, Cys913-Cys926, and Cys928-Cys941. Residues 945–1212 are beta-propeller 4; the sequence is TTFLLFSQKS…AVEEVSLEEF (268 aa). LDL-receptor class B repeat units follow at residues 989–1035, 1036–1078, 1079–1123, 1124–1164, and 1165–1207; these read KFIY…DIYS, RTLF…NAER, GYLY…DNTL, GKLF…TILG, and KHLY…VEEV. Residues 1213–1254 enclose the EGF-like 4 domain; the sequence is SAHPCARDNGGCSHICIAKGDGTPRCSCPVHLVLLQNLLTCG. Cystine bridges form between Cys1217/Cys1228, Cys1224/Cys1238, Cys1240/Cys1253, Cys1259/Cys1273, Cys1266/Cys1286, Cys1280/Cys1295, Cys1298/Cys1310, Cys1305/Cys1323, Cys1317/Cys1332, Cys1336/Cys1348, Cys1343/Cys1361, and Cys1355/Cys1370. 3 consecutive LDL-receptor class A domains span residues 1258 to 1296, 1297 to 1333, and 1335 to 1371; these read TCSP…EGCP, VCSA…ADCD, and ICLP…LMCE. Residues 1385–1407 traverse the membrane as a helical segment; the sequence is SAIGPVIGIILSLFVMGGVYFVC. Topologically, residues 1408–1615 are cytoplasmic; that stretch reads QRVVCQRYAG…PPPSPCTDSS (208 aa). Residues 1475–1501 are disordered; that stretch reads RNHVTGASSSSSSSTKATLYPPILNPP. The short motif at 1500 to 1506 is the PPPSP motif A element; the sequence is PPPSPAT. Residues 1538–1545 carry the PPPSP motif B motif; the sequence is PPTTPCST. A disordered region spans residues 1568-1615; it reads SDSDPYPPPPTPHSQYLSAEDSCPPSPATERSYFHLFPPPPSPCTDSS. Residues 1574–1581 carry the PPPSP motif C motif; that stretch reads PPPPTPHS. Residues 1591-1596 carry the PPPSP motif D motif; it reads PPSPAT. A compositionally biased stretch (pro residues) spans 1604–1615; sequence FPPPPSPCTDSS. Positions 1605 to 1612 match the PPPSP motif E motif; sequence PPPPSPCT.

Belongs to the LDLR family. Homodimer; disulfide-linked. Forms phosphorylated oligomer aggregates on Wnt-signaling. Component of a Wnt-signaling complex that contains a WNT protein, a FZD protein and LRP5 or LRP6. Interacts with FZD8; the interaction is formed on WNT-binding and signaling. Interacts (via the phosphorylated PPPSP motif domains) with AXIN1; the interaction prevents inhibition of beta-catenin phosphorylation and signaling and is enhanced in the presence of GSK3B and WNT1 or WNT3A. Interacts (via beta-propeller regions 3 and 4) with DKK1; the interaction, enhanced by MESD and/or KREMEN, inhibits beta-catenin signaling by preventing GSK3-mediated phosphorylation of the PPPSP motifs and subsequent, AXIN1 binding. Interacts with MESD; the interaction prevents the formation of LRP5 aggregates, targets LRP5 to the plasma membrane and, when complexed with KREMEN2, increases DKK1 binding. Interacts with CSNK1E. Interacts with SOST; the interaction antagonizes canonical Wnt signaling. Interacts with APCDD1. Interacts with CAPRIN2. In terms of processing, phosphorylation of cytoplasmic PPPSP motifs regulates the signal transduction of the Wnt signaling pathway through acting as a docking site for AXIN1. In terms of tissue distribution, widely expressed, with the highest level of expression in the liver and in aorta.

Its subcellular location is the membrane. The protein localises to the endoplasmic reticulum. Acts as a coreceptor with members of the frizzled family of seven-transmembrane spanning receptors to transduce signal by Wnt proteins. Activates the canonical Wnt signaling pathway that controls cell fate determination and self-renewal during embryonic development and adult tissue regeneration. In particular, may play an important role in the development of the posterior patterning of the epiblast during gastrulation. During bone development, regulates osteoblast proliferation and differentiation thus determining bone mass. Mechanistically, the formation of the signaling complex between Wnt ligand, frizzled receptor and LRP5 coreceptor promotes the recruitment of AXIN1 to LRP5, stabilizing beta-catenin/CTNNB1 and activating TCF/LEF-mediated transcriptional programs. Acts as a coreceptor for non-Wnt proteins, such as norrin/NDP. Binding of norrin/NDP to frizzled 4/FZD4-LRP5 receptor complex triggers beta-catenin/CTNNB1-dependent signaling known to be required for retinal vascular development. Plays a role in controlling postnatal vascular regression in retina via macrophage-induced endothelial cell apoptosis. The polypeptide is Low-density lipoprotein receptor-related protein 5 (Homo sapiens (Human)).